We begin with the raw amino-acid sequence, 445 residues long: Tubulin beta-4 chain (445 aa).

GTP is bound by residues Gln11, Glu69, Ser138, Gly142, Thr143, Gly144, Asn204, and Asn226. Glu69 contributes to the Mg(2+) binding site. The tract at residues 421-445 (EYQQYQDATADEEYDEEEEEERDAE) is disordered. Positions 429 to 445 (TADEEYDEEEEEERDAE) are enriched in acidic residues.

Belongs to the tubulin family. In terms of assembly, dimer of alpha and beta chains. A typical microtubule is a hollow water-filled tube with an outer diameter of 25 nm and an inner diameter of 15 nM. Alpha-beta heterodimers associate head-to-tail to form protofilaments running lengthwise along the microtubule wall with the beta-tubulin subunit facing the microtubule plus end conferring a structural polarity. Microtubules usually have 13 protofilaments but different protofilament numbers can be found in some organisms and specialized cells. Mg(2+) is required as a cofactor.

It is found in the cytoplasm. It localises to the cytoskeleton. Its function is as follows. Tubulin is the major constituent of microtubules, a cylinder consisting of laterally associated linear protofilaments composed of alpha- and beta-tubulin heterodimers. Microtubules grow by the addition of GTP-tubulin dimers to the microtubule end, where a stabilizing cap forms. Below the cap, tubulin dimers are in GDP-bound state, owing to GTPase activity of alpha-tubulin. This Triticum aestivum (Wheat) protein is Tubulin beta-4 chain (TUBB4).